Here is a 168-residue protein sequence, read N- to C-terminus: MADPARARRLAVRIREVVASTLERGVKDPRLGMVTVTDVRLTPDLVDATVFYTVYGDETARQASAQALESARGLLRSQVGRATGVKVTPTLTFVHDRLPDDAQHLEKLISVARERDAYLAEVRRDARPAGDDDPYRRPRPAAGEVDELSEVDELSEVDEYGGTARQEG.

The segment covering Val-122–Arg-136 has biased composition (basic and acidic residues). Positions Val-122–Gly-168 are disordered. Residues Glu-144–Glu-159 show a composition bias toward acidic residues.

The protein belongs to the RbfA family. In terms of assembly, monomer. Binds 30S ribosomal subunits, but not 50S ribosomal subunits or 70S ribosomes.

The protein resides in the cytoplasm. One of several proteins that assist in the late maturation steps of the functional core of the 30S ribosomal subunit. Associates with free 30S ribosomal subunits (but not with 30S subunits that are part of 70S ribosomes or polysomes). Required for efficient processing of 16S rRNA. May interact with the 5'-terminal helix region of 16S rRNA. The protein is Ribosome-binding factor A of Frankia casuarinae (strain DSM 45818 / CECT 9043 / HFP020203 / CcI3).